The following is a 232-amino-acid chain: E3 ubiquitin-protein ligase RNF125 (232 aa).

Polar residues predominate over residues 1–10 (MGSVLSTDSG). A disordered region spans residues 1–23 (MGSVLSTDSGKSAPASATARALE). Gly-2 is lipidated: N-myristoyl glycine. Cys-37 and Cys-40 together coordinate Zn(2+). The RING-type zinc finger occupies 37–76 (CAVCLEVLHQPVRTRCGHVFCRSCIATSLKNNKWTCPYCR). An interaction with the C2HC RNF-type zinc finger region spans residues 43-45 (VLH). Zn(2+) contacts are provided by Cys-52, His-54, Cys-57, Cys-60, Cys-72, Cys-75, Cys-100, and Cys-103. A C2HC RNF-type zinc finger spans residues 100–119 (CAECDTLVCLSEMRAHIRTC). Residues 109 to 113 (LSEMR) are interaction with the RING-type zinc finger. Zn(2+) contacts are provided by His-115 and Cys-119. A linker region region spans residues 120 to 128 (QKYIDKYGP). A required for interaction with ubiquitin and for autoubiquitination region spans residues 210 to 224 (EEALIRRVLDRSLLE).

Interacts with UBE2D1. Interacts with VCP/p97; leading to recruit RNF125 to RIGI and promote ubiquitination of RIGI. Post-translationally, autoubiquitinated, leading to its subsequent proteasomal degradation. Predominantly expressed in lymphoid tissues, including bone marrow, spleen and thymus. Also weakly expressed in other tissues. Predominant in the CD4(+) and CD8(+) T-cells, suggesting that it is preferentially confined to T-cells.

The protein resides in the golgi apparatus membrane. The enzyme catalyses S-ubiquitinyl-[E2 ubiquitin-conjugating enzyme]-L-cysteine + [acceptor protein]-L-lysine = [E2 ubiquitin-conjugating enzyme]-L-cysteine + N(6)-ubiquitinyl-[acceptor protein]-L-lysine.. It participates in protein modification; protein ubiquitination. Its function is as follows. E3 ubiquitin-protein ligase that mediates ubiquitination and subsequent proteasomal degradation of target proteins, such as RIGI, MAVS/IPS1, IFIH1/MDA5, JAK1 and p53/TP53. Acts as a negative regulator of type I interferon production by mediating ubiquitination of RIGI at 'Lys-181', leading to RIGI degradation. Mediates ubiquitination and subsequent degradation of p53/TP53. Mediates ubiquitination and subsequent degradation of JAK1. Acts as a positive regulator of T-cell activation. The protein is E3 ubiquitin-protein ligase RNF125 of Homo sapiens (Human).